The chain runs to 227 residues: Orotidine 5'-phosphate decarboxylase (227 aa).

Residues Asp-8, Lys-30, 59–68 (DLKLYDIPYT), Thr-118, Arg-178, Gln-187, Gly-207, and Arg-208 contribute to the substrate site. Catalysis depends on Lys-61, which acts as the Proton donor.

It belongs to the OMP decarboxylase family. Type 1 subfamily. Homodimer.

It carries out the reaction orotidine 5'-phosphate + H(+) = UMP + CO2. Its pathway is pyrimidine metabolism; UMP biosynthesis via de novo pathway; UMP from orotate: step 2/2. Its function is as follows. Catalyzes the decarboxylation of orotidine 5'-monophosphate (OMP) to uridine 5'-monophosphate (UMP). In Helicobacter pylori (strain Shi470), this protein is Orotidine 5'-phosphate decarboxylase.